Consider the following 421-residue polypeptide: Histidine--tRNA ligase (421 aa).

This sequence belongs to the class-II aminoacyl-tRNA synthetase family.

It localises to the cytoplasm. It catalyses the reaction tRNA(His) + L-histidine + ATP = L-histidyl-tRNA(His) + AMP + diphosphate + H(+). This chain is Histidine--tRNA ligase, found in Pyrobaculum calidifontis (strain DSM 21063 / JCM 11548 / VA1).